A 224-amino-acid polypeptide reads, in one-letter code: Uracil-DNA glycosylase 2 (224 aa).

Residue D64 is the Proton acceptor of the active site.

Belongs to the uracil-DNA glycosylase (UDG) superfamily. UNG family.

The protein resides in the cytoplasm. The enzyme catalyses Hydrolyzes single-stranded DNA or mismatched double-stranded DNA and polynucleotides, releasing free uracil.. Its function is as follows. Excises uracil residues from the DNA which can arise as a result of misincorporation of dUMP residues by DNA polymerase or due to deamination of cytosine. This chain is Uracil-DNA glycosylase 2, found in Listeria monocytogenes serotype 4b (strain F2365).